The sequence spans 1730 residues: Nebulin-related-anchoring protein (1730 aa).

The LIM zinc-binding domain occupies 4–64; it reads QPCSRCGYGV…HAHNPKNNTF (61 aa). Nebulin repeat units lie at residues 63-97, 156-166, 175-202, 203-237, 246-273, 298-307, 316-343, 348-382, 389-417, 419-453, 487-521, 522-556, 558-592, 602-626, 627-661, 662-692, 702-724, 726-760, 761-795, 797-831, 844-869, 870-896, 901-935, 945-963, 969-1003, 1004-1038, 1040-1074, 1078-1112, 1113-1139, 1144-1178, 1183-1206, 1212-1246, 1247-1281, 1283-1317, 1321-1355, 1356-1390, 1391-1421, 1429-1449, 1455-1481, 1490-1524, 1526-1560, 1564-1598, 1599-1626, and 1640-1664; these read TFTS…QCKS, EYTEDYEQPRG, TPAY…ERIS, RFST…QQRG, TPAY…KEMR, YPEEYEEHRG, TPAY…KMKG, HSLP…SSRG, ETPQ…NHMR, RYEG…HDIV, KYSS…KNKL, NYTL…KTKG, GFEM…KTKG, LLHS…ESKT, RFHL…EYTV, LPED…WMKG, NLEQ…RVDE, KFTS…QSVH, QYTI…NQKA, GFEL…RSRG, QMSH…DTKS, QCHV…VGYK, HFTA…WMKG, NVEQ…KYRQ, KFTS…NIKH, HYTP…KLRD, GYKL…KMKG, GSRS…HSKA, QFHL…QDYK, QYTS…FMRG, IPGT…KYRQ, KYTA…DARH, EYTM…NLRA, GYKL…KERG, GPQS…SSQA, QFHL…KFTA, LPED…GMKG, SPQM…KYRK, KFTT…RMYR, RYTL…QTRA, SYDF…RDRG, GYRS…KSRS, QFHS…HYRQ, and LRHA…LTRG. Ser-1081 bears the Phosphoserine mark. Positions 1595–1620 are disordered; that stretch reads KSRSQFHSSTDQPGLLQAKRSQQLAS. Positions 1596–1606 are enriched in polar residues; sequence SRSQFHSSTDQ.

Interacts with actin, alpha-actinin, KLHL41, TLN1 and VCL. Interacts with CSRP3. In terms of tissue distribution, expressed in cardiac and skeletal muscle.

May be involved in anchoring the terminal actin filaments in the myofibril to the membrane and in transmitting tension from the myofibrils to the extracellular matrix. This is Nebulin-related-anchoring protein from Homo sapiens (Human).